Consider the following 535-residue polypeptide: MAGDQLNVLNALDVAKTQWYHFTAIIIAGMGFFTDAYDLFCISLVTKLLGRIYYHVDGSEKPGTLPPNVSAAVNGVAFCGTLAGQLFFGWLGDKLGRKKVYGMTLMVMVLCSIASGLSFGSNPKTVMTTLCFFRFWLGFGIGGDYPLSATIMSEYANKKTRGAFIAAVFAMQGFGILTGGIFAIIVSAAFEAKFPAPTYQIDALASTVPQADYVWRIILMVGALPAAMTYYSRSKMPETARYTALVAKDAKLAASNMSKVLQVEIEAEQQGTEDKSNSFGLFSKEFMKRHGLHLLGTTSTWFLLDIAFYSQNLFQKDIFSAIGWIPPAQTMNAIQEVFKIARAQTLIALCSTVPGYWFTVAFIDVIGRFAIQMMGFFFMTVFMFALAIPYDHWTHKENRIGFVAMYSLTFFFANFGPNATTFVVPAEIFPARFRSTCHGISAASGKLGAMVGAFGFLYLAQSPDKTKTEHGYPPGIGVKNSLIVLGVVNLLGMVFTLLVPESKGKSLEEMSGENEQNDESSSSSNNNSNNAVSTA.

The Cytoplasmic segment spans residues 1-24; sequence MAGDQLNVLNALDVAKTQWYHFTA. Residues 25–45 traverse the membrane as a helical segment; sequence IIIAGMGFFTDAYDLFCISLV. Topologically, residues 46-70 are extracellular; that stretch reads TKLLGRIYYHVDGSEKPGTLPPNVS. Residues 71–91 form a helical membrane-spanning segment; the sequence is AAVNGVAFCGTLAGQLFFGWL. Over 92-99 the chain is Cytoplasmic; that stretch reads GDKLGRKK. The chain crosses the membrane as a helical span at residues 100–120; it reads VYGMTLMVMVLCSIASGLSFG. Residues 121–131 lie on the Extracellular side of the membrane; that stretch reads SNPKTVMTTLC. A helical membrane pass occupies residues 132-152; sequence FFRFWLGFGIGGDYPLSATIM. Over 153 to 161 the chain is Cytoplasmic; sequence SEYANKKTR. A helical membrane pass occupies residues 162 to 182; sequence GAFIAAVFAMQGFGILTGGIF. Topologically, residues 183–211 are extracellular; sequence AIIVSAAFEAKFPAPTYQIDALASTVPQA. A helical membrane pass occupies residues 212 to 232; that stretch reads DYVWRIILMVGALPAAMTYYS. At 233–289 the chain is on the cytoplasmic side; it reads RSKMPETARYTALVAKDAKLAASNMSKVLQVEIEAEQQGTEDKSNSFGLFSKEFMKR. The helical transmembrane segment at 290 to 310 threads the bilayer; sequence HGLHLLGTTSTWFLLDIAFYS. The Extracellular segment spans residues 311–345; that stretch reads QNLFQKDIFSAIGWIPPAQTMNAIQEVFKIARAQT. Residues 346 to 366 form a helical membrane-spanning segment; that stretch reads LIALCSTVPGYWFTVAFIDVI. Residues 367–368 lie on the Cytoplasmic side of the membrane; the sequence is GR. A helical membrane pass occupies residues 369-389; sequence FAIQMMGFFFMTVFMFALAIP. Over 390-399 the chain is Extracellular; it reads YDHWTHKENR. A helical transmembrane segment spans residues 400 to 420; the sequence is IGFVAMYSLTFFFANFGPNAT. Topologically, residues 421–438 are cytoplasmic; the sequence is TFVVPAEIFPARFRSTCH. Residues 439 to 459 form a helical membrane-spanning segment; it reads GISAASGKLGAMVGAFGFLYL. Topologically, residues 460-480 are extracellular; that stretch reads AQSPDKTKTEHGYPPGIGVKN. Residues 481-501 form a helical membrane-spanning segment; the sequence is SLIVLGVVNLLGMVFTLLVPE. The Cytoplasmic segment spans residues 502 to 535; that stretch reads SKGKSLEEMSGENEQNDESSSSSNNNSNNAVSTA. A disordered region spans residues 506–535; that stretch reads SLEEMSGENEQNDESSSSSNNNSNNAVSTA. The span at 519-535 shows a compositional bias: low complexity; that stretch reads ESSSSSNNNSNNAVSTA. S520 is subject to Phosphoserine.

It belongs to the major facilitator superfamily. Phosphate:H(+) symporter (TC 2.A.1.9) family. In terms of tissue distribution, mature pollen.

Its subcellular location is the membrane. High-affinity transporter for external inorganic phosphate. This is Probable inorganic phosphate transporter 1-7 (PHT1-7) from Arabidopsis thaliana (Mouse-ear cress).